Consider the following 439-residue polypeptide: Ribosomal protein uS12 methylthiotransferase RimO (439 aa).

Positions 5 to 115 (PRISFTSLGC…VLDAVHRALP (111 aa)) constitute an MTTase N-terminal domain. [4Fe-4S] cluster contacts are provided by C14, C50, C79, C146, C150, and C153. Residues 132-369 (LTPRHYAYLK…MARQQKISAR (238 aa)) enclose the Radical SAM core domain. One can recognise a TRAM domain in the interval 372–438 (KRKVGTRQQI…QYDLHGSVAG (67 aa)).

It belongs to the methylthiotransferase family. RimO subfamily. The cofactor is [4Fe-4S] cluster.

The protein localises to the cytoplasm. It carries out the reaction L-aspartate(89)-[ribosomal protein uS12]-hydrogen + (sulfur carrier)-SH + AH2 + 2 S-adenosyl-L-methionine = 3-methylsulfanyl-L-aspartate(89)-[ribosomal protein uS12]-hydrogen + (sulfur carrier)-H + 5'-deoxyadenosine + L-methionine + A + S-adenosyl-L-homocysteine + 2 H(+). Catalyzes the methylthiolation of an aspartic acid residue of ribosomal protein uS12. This Bradyrhizobium diazoefficiens (strain JCM 10833 / BCRC 13528 / IAM 13628 / NBRC 14792 / USDA 110) protein is Ribosomal protein uS12 methylthiotransferase RimO.